Here is a 350-residue protein sequence, read N- to C-terminus: Quinone oxidoreductase-like protein 2 (350 aa).

K36 bears the N6-acetyllysine mark. K201 is modified (N6-succinyllysine). N6-acetyllysine occurs at positions 302 and 328.

It belongs to the zinc-containing alcohol dehydrogenase family. Quinone oxidoreductase subfamily.

The chain is Quinone oxidoreductase-like protein 2 from Mus musculus (Mouse).